The following is an 87-amino-acid chain: Large ribosomal subunit protein uL23c (87 aa).

Belongs to the universal ribosomal protein uL23 family. In terms of assembly, part of the 50S ribosomal subunit.

The protein localises to the plastid. Its subcellular location is the chloroplast. In terms of biological role, binds to 23S rRNA. The sequence is that of Large ribosomal subunit protein uL23c (rpl23) from Ostreococcus tauri.